An 802-amino-acid polypeptide reads, in one-letter code: Spondin-1 (802 aa).

An N-terminal signal peptide occupies residues 1 to 23; it reads MAARLRPLALRLLARTFPLVARG. The 166-residue stretch at 24-189 folds into the Reelin domain; that stretch reads FSDETLEKAA…DSASEGVTDK (166 aa). 17 disulfide bridges follow: cysteine 39–cysteine 123, cysteine 151–cysteine 177, cysteine 194–cysteine 331, cysteine 195–cysteine 335, cysteine 197–cysteine 410, cysteine 438–cysteine 475, cysteine 449–cysteine 484, cysteine 454–cysteine 489, cysteine 497–cysteine 533, cysteine 508–cysteine 512, cysteine 543–cysteine 549, cysteine 554–cysteine 590, cysteine 565–cysteine 569, cysteine 600–cysteine 605, cysteine 610–cysteine 645, cysteine 621–cysteine 625, and cysteine 655–cysteine 660. The Spondin domain occupies 190-383; it reads PTLDCCACGT…LTSLDHPQSP (194 aa). Asparagine 209 carries an N-linked (GlcNAc...) asparagine glycan. 3 residues coordinate Ca(2+): aspartate 320, aspartate 349, and aspartate 353. TSP type-1 domains lie at 437–490, 496–550, 553–606, 609–661, 663–716, and 749–801; these read TCIY…PGCS, TCMM…EECS, SCLV…PECH, PCLL…PECP, DCEL…RKCL, and VCRL…NVHP. Asparagine 676 is a glycosylation site (N-linked (GlcNAc...) asparagine).

It localises to the secreted. The protein localises to the extracellular space. It is found in the extracellular matrix. In terms of biological role, cell adhesion protein that promotes the attachment of spinal cord and sensory neuron cells and the outgrowth of neurites in vitro. May contribute to the growth and guidance of axons in both the spinal cord and the PNS. Somite-derived spondin 1 is an inhibitory signal involved in patterning the segmental migration of neural crest cells and their topographical segregation within the rostral somites in vitro. May be required to prevent the lateral drifting of the commissural axons after having crossed the floor plate. The sequence is that of Spondin-1 (SPON1) from Gallus gallus (Chicken).